The following is a 460-amino-acid chain: ATP synthase subunit beta (460 aa).

150-157 (GGAGVGKT) contributes to the ATP binding site.

This sequence belongs to the ATPase alpha/beta chains family. F-type ATPases have 2 components, CF(1) - the catalytic core - and CF(0) - the membrane proton channel. CF(1) has five subunits: alpha(3), beta(3), gamma(1), delta(1), epsilon(1). CF(0) has three main subunits: a(1), b(2) and c(9-12). The alpha and beta chains form an alternating ring which encloses part of the gamma chain. CF(1) is attached to CF(0) by a central stalk formed by the gamma and epsilon chains, while a peripheral stalk is formed by the delta and b chains.

The protein resides in the cell inner membrane. It carries out the reaction ATP + H2O + 4 H(+)(in) = ADP + phosphate + 5 H(+)(out). Functionally, produces ATP from ADP in the presence of a proton gradient across the membrane. The catalytic sites are hosted primarily by the beta subunits. This is ATP synthase subunit beta from Escherichia coli (strain SMS-3-5 / SECEC).